Consider the following 511-residue polypeptide: Archaeal glutamate synthase [NADPH] (511 aa).

4Fe-4S ferredoxin-type domains follow at residues 15–44 (FMIE…YDEE) and 46–75 (DMMR…VKPH). The [4Fe-4S] cluster site is built by Cys-24, Cys-27, Cys-30, Cys-34, Cys-55, Cys-58, Cys-61, and Cys-65.

The protein belongs to the glutamate synthase family. The cofactor is FMN.

The enzyme catalyses 2 L-glutamate + NADP(+) = L-glutamine + 2-oxoglutarate + NADPH + H(+). In Archaeoglobus fulgidus (strain ATCC 49558 / DSM 4304 / JCM 9628 / NBRC 100126 / VC-16), this protein is Archaeal glutamate synthase [NADPH].